Here is a 97-residue protein sequence, read N- to C-terminus: Histone H1.C2 (97 aa).

A disordered region spans residues 24 to 97; that stretch reads AAVPPKKAAP…KKAVKKAPKK (74 aa). A compositionally biased stretch (basic residues) spans 31–97; sequence AAPKKAVAKK…KKAVKKAPKK (67 aa).

Its subcellular location is the nucleus. The protein localises to the chromosome. The chain is Histone H1.C2 from Trypanosoma cruzi.